A 104-amino-acid chain; its full sequence is Cytochrome c-551 (104 aa).

The signal sequence occupies residues 1 to 22; the sequence is MKPYALLSLLATGTLLAQGAWA. Residues C34, C37, H38, and M83 each coordinate heme c.

In terms of processing, binds 1 heme c group covalently per subunit.

Its subcellular location is the periplasm. Functionally, electron donor for cytochrome cd1 in nitrite and nitrate respiration. The sequence is that of Cytochrome c-551 (nirM) from Pseudomonas aeruginosa (strain ATCC 15692 / DSM 22644 / CIP 104116 / JCM 14847 / LMG 12228 / 1C / PRS 101 / PAO1).